The chain runs to 163 residues: Translation initiation factor IF-3-like (163 aa).

The protein belongs to the IF-3 family.

The sequence is that of Translation initiation factor IF-3-like from Nostoc sp. (strain PCC 7120 / SAG 25.82 / UTEX 2576).